Here is a 376-residue protein sequence, read N- to C-terminus: tRNA 2-selenouridine synthase (376 aa).

A Rhodanese domain is found at 15–138 (FVAGKPLIDL…MRQYLIGVIE (124 aa)). Cys98 (S-selanylcysteine intermediate) is an active-site residue.

This sequence belongs to the SelU family. In terms of assembly, monomer.

The enzyme catalyses 5-methylaminomethyl-2-thiouridine(34) in tRNA + selenophosphate + (2E)-geranyl diphosphate + H2O + H(+) = 5-methylaminomethyl-2-selenouridine(34) in tRNA + (2E)-thiogeraniol + phosphate + diphosphate. The catalysed reaction is 5-methylaminomethyl-2-thiouridine(34) in tRNA + (2E)-geranyl diphosphate = 5-methylaminomethyl-S-(2E)-geranyl-thiouridine(34) in tRNA + diphosphate. It carries out the reaction 5-methylaminomethyl-S-(2E)-geranyl-thiouridine(34) in tRNA + selenophosphate + H(+) = 5-methylaminomethyl-2-(Se-phospho)selenouridine(34) in tRNA + (2E)-thiogeraniol. It catalyses the reaction 5-methylaminomethyl-2-(Se-phospho)selenouridine(34) in tRNA + H2O = 5-methylaminomethyl-2-selenouridine(34) in tRNA + phosphate. Functionally, involved in the post-transcriptional modification of the uridine at the wobble position (U34) of tRNA(Lys), tRNA(Glu) and tRNA(Gln). Catalyzes the conversion of 2-thiouridine (S2U-RNA) to 2-selenouridine (Se2U-RNA). Acts in a two-step process involving geranylation of 2-thiouridine (S2U) to S-geranyl-2-thiouridine (geS2U) and subsequent selenation of the latter derivative to 2-selenouridine (Se2U) in the tRNA chain. In Shewanella oneidensis (strain ATCC 700550 / JCM 31522 / CIP 106686 / LMG 19005 / NCIMB 14063 / MR-1), this protein is tRNA 2-selenouridine synthase.